The primary structure comprises 597 residues: Elongation factor 4 (597 aa).

The tr-type G domain occupies 2-184; the sequence is KNIRNFSIIA…TIVAKVPAPE (183 aa). GTP-binding positions include 14–19 and 131–134; these read DHGKST and NKID.

This sequence belongs to the TRAFAC class translation factor GTPase superfamily. Classic translation factor GTPase family. LepA subfamily.

It localises to the cell inner membrane. It catalyses the reaction GTP + H2O = GDP + phosphate + H(+). Its function is as follows. Required for accurate and efficient protein synthesis under certain stress conditions. May act as a fidelity factor of the translation reaction, by catalyzing a one-codon backward translocation of tRNAs on improperly translocated ribosomes. Back-translocation proceeds from a post-translocation (POST) complex to a pre-translocation (PRE) complex, thus giving elongation factor G a second chance to translocate the tRNAs correctly. Binds to ribosomes in a GTP-dependent manner. The protein is Elongation factor 4 of Francisella tularensis subsp. mediasiatica (strain FSC147).